Here is a 590-residue protein sequence, read N- to C-terminus: J protein JJJ1 (590 aa).

Residues 3–72 form the J domain; it reads TCYYELLGVE…RAWYDSHKEQ (70 aa). Basic and acidic residues predominate over residues 269–284; sequence EQRKLKEQQRKNELNN. The tract at residues 269–293 is disordered; sequence EQRKLKEQQRKNELNNRRKFGNDNN. The segment at 338 to 362 adopts a C2H2-type 1 zinc-finger fold; that stretch reads YECFICNKTFKSEKQLKNHINTKLH. Serine 393 is modified (phosphoserine). A disordered region spans residues 441-546; sequence EVEDVSSDEN…TLPSSMSPTS (106 aa). Residues 455 to 467 are compositionally biased toward basic residues; that stretch reads TKNKKKRKKKKKA. Residues 480-489 are compositionally biased toward basic and acidic residues; sequence DDTKDKRSNE. A Phosphothreonine modification is found at threonine 504. A compositionally biased stretch (basic residues) spans 513-527; the sequence is KAKKKKGKQPKKNSK. Low complexity predominate over residues 528 to 546; that stretch reads STKSTPSLSTLPSSMSPTS. Residues 549-573 form a C2H2-type 2 zinc finger; the sequence is EVCTTCGESFDSRNKLFNHVKIAGH.

Its subcellular location is the nucleus. This Saccharomyces cerevisiae (strain ATCC 204508 / S288c) (Baker's yeast) protein is J protein JJJ1 (JJJ1).